A 1434-amino-acid chain; its full sequence is MQNNKNYTEKFITDKVMRRDYSKIKSNFEGPNLLEIQVESFKRFMEKDLKEVISSIFPLKSPQGKYTLAFKGLKIKQPTKDESACRDEGKTFETPIYIDLELTDNYTGEVKRAQRNTKTGEDGIYLGAIPKMTEKGTFVINGIEKFVISQIVRSPGIYVLGKSSIKLNGSRKRLFEGKICEIYPSKGTLMLGYIPKDRHNIQIVARDSSGDNAQTFSVTTLLKAFGLTSAEILKIFNNEKEIRESLEIEKYAPEYIFENSQENEIIFKIYSDAHDIHEKADRRESNNKLKEEYIEQGSPLLSKLKQLIFNYVEKNDEIDALLHENKDVEDASFIKNNKKLYDEREEIINCIISEKAAKDIVELLGINIKNIETLRHLGKASYQIALQQHFFNKRLYDISSAGRYKFEKKLLLSERLYQKVIANDIIDKKNNILIPKDTLITKEHIELIKKESRDKNIKWTKKINLLPTALESEIEQFLEYESIAVYKDNDLRDETTEIVGLASGCKLQTLTVADLVATTSYIYNLNYEIGEFDDIDHLGNKRLKLIHELLRARIATSMARIEKFINEKLAISDGSSNNITNVNDKGIDTELDREIEESDMSDEEKKKAISVKSIINTKQFQSLVKDFFNSHQLIQFIDQQNPLAELTNKRRISAMGPGGISREDPNLDIRDVHHSHSSRICPIETPEGMNIGLIMSLASLAKVDENGFIVAPYYVVEDGVVKEDYKYLTAHEDDNYIIAESSVQLDENKRILDEQVVARYRGSTGLFSPNEVDFIDIVPKQVVSIAASAIPFIENDDGARALMGSNMQRQATPLIKPYAPIVGTGTEFKIAHDSGMAVVAKNDGVVEFVDSQKIIIRNDNDKLDDYKLIKYRKSNQDTCNNQIPIVKVGQRVHKSETIGDGPAMQNGELALGRNILVGYTTWRGYNFEDAIIISERLVDQDVFTSIHIDEHTIQCMKTKNGDEEITRDMPNVSDTAKRFLDNQGIVLVGAEVHEGDVLVGKTTPRGNVETAPEDRLLQTIFGDKSKTVKDSSLKVKHGQEGIVAAVKRIKSSDENGSELPDDVIEIIKVYIVQKRKIQVGDKMAGRHGNKGIVSKVVPIQDMPFLKDGTPLDIMLNPLGVPSRMNIGQILELHLGYAAAEIGKKQLIQIAIDQLGYEKYISLFGINEIIAKKLYENISNLIKHKQAKQAKDIDLIDVTIILKELGLSYDDIGIKISTPVFDGANHDDIVSIMNEANIDIENNKGKQVLYDGRTGEPFDGLISVGLTYMLKLDHMVDDKIHSRSVGPYSKITQQPLGGKSQNGGQRFGEMEVWALEAYGAAYNLLEILTIKSDDVQGRNQAYNAIIKGHDVVADGMPESFKLLTKQMQGLGLCITVETKDDRMVDINEYTLNQNRLNNDDDEVILDENLKEINDSNEEIFNTNFNNNDYDDEENF.

Belongs to the RNA polymerase beta chain family. In terms of assembly, the RNAP catalytic core consists of 2 alpha, 1 beta, 1 beta' and 1 omega subunit. When a sigma factor is associated with the core the holoenzyme is formed, which can initiate transcription.

The catalysed reaction is RNA(n) + a ribonucleoside 5'-triphosphate = RNA(n+1) + diphosphate. DNA-dependent RNA polymerase catalyzes the transcription of DNA into RNA using the four ribonucleoside triphosphates as substrates. In Ureaplasma parvum serovar 3 (strain ATCC 700970), this protein is DNA-directed RNA polymerase subunit beta.